We begin with the raw amino-acid sequence, 213 residues long: tRNA (guanine-N(7)-)-methyltransferase (213 aa).

S-adenosyl-L-methionine contacts are provided by Glu44, Glu69, Asn96, and Asp118. Asp118 is an active-site residue. Lys122 contacts substrate. Positions 124-129 (RHEKRR) are interaction with RNA. Residues Asp154 and 191–194 (TEYE) each bind substrate.

Belongs to the class I-like SAM-binding methyltransferase superfamily. TrmB family.

It catalyses the reaction guanosine(46) in tRNA + S-adenosyl-L-methionine = N(7)-methylguanosine(46) in tRNA + S-adenosyl-L-homocysteine. It functions in the pathway tRNA modification; N(7)-methylguanine-tRNA biosynthesis. Catalyzes the formation of N(7)-methylguanine at position 46 (m7G46) in tRNA. In Oceanobacillus iheyensis (strain DSM 14371 / CIP 107618 / JCM 11309 / KCTC 3954 / HTE831), this protein is tRNA (guanine-N(7)-)-methyltransferase.